A 546-amino-acid chain; its full sequence is Glutathione synthetase, chloroplastic (546 aa).

Residues 1-63 constitute a chloroplast transit peptide; it reads MGSGCSSPSI…SPLKCAKVPE (63 aa). Arg200 lines the substrate pocket. Residue Glu216 coordinates ATP. Mg(2+) is bound by residues Glu216 and Asn218. Substrate is bound by residues 220–223, 288–290, Gln294, and 342–345; these read ISSS, ERN, and RAGY. ATP-binding positions include Lys381, 435 to 444, Tyr446, 471 to 474, and Glu497; these read KPQREGGGNN and MQRI. Position 439 (Glu439) interacts with Mg(2+). Arg522 is a substrate binding site. ATP contacts are provided by Lys524 and Glu530. 533 to 534 is a binding site for substrate; that stretch reads VA.

The protein belongs to the eukaryotic GSH synthase family. As to quaternary structure, homodimer. It depends on Mg(2+) as a cofactor.

The protein resides in the plastid. It localises to the chloroplast. It carries out the reaction gamma-L-glutamyl-L-cysteine + glycine + ATP = glutathione + ADP + phosphate + H(+). It functions in the pathway sulfur metabolism; glutathione biosynthesis; glutathione from L-cysteine and L-glutamate: step 2/2. The polypeptide is Glutathione synthetase, chloroplastic (GSH2) (Solanum lycopersicum (Tomato)).